Reading from the N-terminus, the 82-residue chain is uncharacterized protein (82 aa).

The next 2 helical transmembrane spans lie at 8-28 (LTTAAGILLMAFLSCLLLPAP) and 50-70 (LYTLLFCLWFLVLGAIEYFVL).

It localises to the cell membrane. This is an uncharacterized protein from Escherichia coli (strain K12).